Here is a 199-residue protein sequence, read N- to C-terminus: Probable adenylyl-sulfate kinase (199 aa).

34–41 (GLSGSGKS) serves as a coordination point for ATP. Serine 108 serves as the catalytic Phosphoserine intermediate.

It belongs to the APS kinase family.

It carries out the reaction adenosine 5'-phosphosulfate + ATP = 3'-phosphoadenylyl sulfate + ADP + H(+). Its pathway is sulfur metabolism; hydrogen sulfide biosynthesis; sulfite from sulfate: step 2/3. In terms of biological role, catalyzes the synthesis of activated sulfate. The polypeptide is Probable adenylyl-sulfate kinase (yisZ) (Bacillus subtilis (strain 168)).